A 122-amino-acid chain; its full sequence is Biogenesis of lysosome-related organelles complex 1 subunit CNL1 (122 aa).

Basic and acidic residues predominate over residues 1–10 (MQDNSSHSRE). The interval 1 to 21 (MQDNSSHSRESASAGDDPLGI) is disordered. The stretch at 63 to 95 (ENTIDKNIAKFKELLEKCDTLENHYEMLNQLAI) forms a coiled coil.

This sequence belongs to the BLOC1S4 family. As to quaternary structure, component of the biogenesis of lysosome-related organelles complex-1 (BLOC-1) composed of at least BLI1, BLS1, CNL1, KXD1, SNN1 and VAB2.

The protein localises to the cytoplasm. Component of the biogenesis of lysosome-related organelles complex-1 (BLOC-1), a complex that is involved in endosomal cargo sorting. The protein is Biogenesis of lysosome-related organelles complex 1 subunit CNL1 (CNL1) of Saccharomyces cerevisiae (strain ATCC 204508 / S288c) (Baker's yeast).